Here is a 224-residue protein sequence, read N- to C-terminus: Small ribosomal subunit protein uS3 (224 aa).

A KH type-2 domain is found at 38–106 (IRKFISEKLK…QVHINIVEIK (69 aa)).

The protein belongs to the universal ribosomal protein uS3 family. In terms of assembly, part of the 30S ribosomal subunit. Forms a tight complex with proteins S10 and S14.

Its function is as follows. Binds the lower part of the 30S subunit head. Binds mRNA in the 70S ribosome, positioning it for translation. This is Small ribosomal subunit protein uS3 from Lactobacillus acidophilus (strain ATCC 700396 / NCK56 / N2 / NCFM).